A 410-amino-acid chain; its full sequence is Probable nicotinate phosphoribosyltransferase (410 aa).

The nicotinate site is built by Tyr15, Phe170, and Thr220. Phosphohistidine is present on His223. Residue Thr348 coordinates 5-phospho-alpha-D-ribose 1-diphosphate.

Belongs to the NAPRTase family. The cofactor is Mg(2+). Requires Mn(2+) as cofactor. Transiently phosphorylated on a His residue during the reaction cycle. Phosphorylation strongly increases the affinity for substrates and increases the rate of nicotinate D-ribonucleotide production. Dephosphorylation regenerates the low-affinity form of the enzyme, leading to product release.

The catalysed reaction is nicotinate + 5-phospho-alpha-D-ribose 1-diphosphate + ATP + H2O = nicotinate beta-D-ribonucleotide + ADP + phosphate + diphosphate. It participates in cofactor biosynthesis; NAD(+) biosynthesis; nicotinate D-ribonucleotide from nicotinate: step 1/1. Its function is as follows. Catalyzes the first step in the biosynthesis of NAD from nicotinic acid, the ATP-dependent synthesis of beta-nicotinate D-ribonucleotide from nicotinate and 5-phospho-D-ribose 1-phosphate. Helps prevent cellular oxidative stress via its role in NAD biosynthesis. The protein is Probable nicotinate phosphoribosyltransferase of Schizosaccharomyces pombe (strain 972 / ATCC 24843) (Fission yeast).